The sequence spans 320 residues: Aspartate carbamoyltransferase catalytic subunit (320 aa).

Residues Arg-68 and Thr-69 each contribute to the carbamoyl phosphate site. Lys-96 contributes to the L-aspartate binding site. Residues Arg-118, His-148, and Gln-151 each coordinate carbamoyl phosphate. L-aspartate is bound by residues Arg-181 and Arg-236. Carbamoyl phosphate contacts are provided by Gly-277 and Pro-278.

The protein belongs to the aspartate/ornithine carbamoyltransferase superfamily. ATCase family. In terms of assembly, heterododecamer (2C3:3R2) of six catalytic PyrB chains organized as two trimers (C3), and six regulatory PyrI chains organized as three dimers (R2).

It catalyses the reaction carbamoyl phosphate + L-aspartate = N-carbamoyl-L-aspartate + phosphate + H(+). It functions in the pathway pyrimidine metabolism; UMP biosynthesis via de novo pathway; (S)-dihydroorotate from bicarbonate: step 2/3. In terms of biological role, catalyzes the condensation of carbamoyl phosphate and aspartate to form carbamoyl aspartate and inorganic phosphate, the committed step in the de novo pyrimidine nucleotide biosynthesis pathway. This Polaromonas naphthalenivorans (strain CJ2) protein is Aspartate carbamoyltransferase catalytic subunit.